A 151-amino-acid polypeptide reads, in one-letter code: UPF0208 membrane protein YfbV (151 aa).

A run of 2 helical transmembrane segments spans residues 46 to 65 and 69 to 91; these read YAIR…QIAL and LGPA…WWLG.

This sequence belongs to the UPF0208 family.

It localises to the cell inner membrane. In Escherichia coli O1:K1 / APEC, this protein is UPF0208 membrane protein YfbV.